The sequence spans 593 residues: Meiosis-specific APC/C activator protein AMA1 (593 aa).

A compositionally biased stretch (basic residues) spans 1-11; that stretch reads MATPHLYHRYN. Positions 1–26 are disordered; it reads MATPHLYHRYNSKSSNKNINSSGNST. Low complexity predominate over residues 12–25; that stretch reads SKSSNKNINSSGNS. The C-box motif lies at 29-35; it reads DRFIPKS. Over residues 94 to 109 the composition is skewed to low complexity; sequence SSISSSSESQVTRSGS. The tract at residues 94-125 is disordered; that stretch reads SSISSSSESQVTRSGSARASRNDYSKLTKEQK. Residues 113–125 show a composition bias toward basic and acidic residues; sequence SRNDYSKLTKEQK. WD repeat units lie at residues 226-264, 271-310, 323-364, 388-427, 432-474, and 525-564; these read RNDFYSNLISWSRTTNNVLVGLGCSVYIWSEKEGAVSIL, EKRDLVTCVSFCPYNTYFIVGTKFGRILLYDQKEFFHSSN, ESFK…FPIK, AQAQQVCGISLNEHANLLAVGGNDNSCSLWDISDLDKPIK, PHKA…LLDE, and PNPLRVLSAVISPSSMAICVATNDETIRFYELWNDKEEII.

Belongs to the WD repeat CDC20/Fizzy family. As to quaternary structure, interacts with CDC16.

Activator protein that regulates the ubiquitin ligase activity and substrate specificity of the anaphase promoting complex/cyclosome (APC/C). Required for the ubiquitination and subsequent degradation of the B-type cyclin CLB1 by the APC/C complex during meiosis. Required for meiosis I, late meiotic gene expression and spore wall assembly. This is Meiosis-specific APC/C activator protein AMA1 (AMA1) from Saccharomyces cerevisiae (strain ATCC 204508 / S288c) (Baker's yeast).